The sequence spans 177 residues: Protein BROTHER of FT and TFL 1 (177 aa).

Belongs to the phosphatidylethanolamine-binding protein family.

Its subcellular location is the cytoplasm. Its function is as follows. May form complexes with phosphorylated ligands by interfering with kinases and their effectors. This is Protein BROTHER of FT and TFL 1 (BFT) from Arabidopsis thaliana (Mouse-ear cress).